Here is a 142-residue protein sequence, read N- to C-terminus: Large ribosomal subunit protein bL17 (142 aa).

Belongs to the bacterial ribosomal protein bL17 family. As to quaternary structure, part of the 50S ribosomal subunit. Contacts protein L32.

The sequence is that of Large ribosomal subunit protein bL17 from Wolbachia sp. subsp. Brugia malayi (strain TRS).